The chain runs to 264 residues: uncharacterized protein (264 aa).

3 stretches are compositionally biased toward polar residues: residues 1 to 18 (MFENLNTALTPKLQSSRS), 73 to 83 (SLGSVGTTEVN), and 126 to 139 (KTTQDMLISSQPVL). Disordered stretches follow at residues 1–47 (MFEN…WVGS) and 68–264 (RKEP…LSFE). Over residues 149-171 (SSGQPQVSSSAQPSPADASQPEA) the composition is skewed to low complexity. Over residues 194 to 212 (LIHKDGQDDPKLKVTECRR) the composition is skewed to basic and acidic residues. Residues S214, S215, S241, and S250 each carry the phosphoserine modification.

This is an uncharacterized protein from Bos taurus (Bovine).